Consider the following 359-residue polypeptide: uncharacterized protein (359 aa).

A PINc domain is found at 163–275 (VVDTSCIIDG…SKVANLQKVQ (113 aa)). Positions 165 and 244 each coordinate Mg(2+). Positions 289–350 (IYLPGDSLEL…LQTSAGRMIF (62 aa)) constitute a TRAM domain.

This sequence belongs to the ycf81 family. The protein in the central section; belongs to the PINc/VapC protein family. The cofactor is Mg(2+).

Its function is as follows. An RNase. This is an uncharacterized protein from Synechocystis sp. (strain ATCC 27184 / PCC 6803 / Kazusa).